A 462-amino-acid chain; its full sequence is Elongation factor 1-alpha 1 (462 aa).

N,N,N-trimethylglycine is present on Gly-2. The tr-type G domain occupies 5–242 (KTHINIVVIG…DCILPPTRPT (238 aa)). The interval 14–21 (GHVDSGKS) is G1. Position 14–21 (14–21 (GHVDSGKS)) interacts with GTP. At Lys-36 the chain carries N6,N6,N6-trimethyllysine; alternate. The residue at position 36 (Lys-36) is an N6,N6-dimethyllysine; alternate. Lys-36 is modified (N6-methyllysine; alternate). Lys-55 is subject to N6,N6-dimethyllysine. A G2 region spans residues 70 to 74 (GITID). Lys-79 carries the N6,N6,N6-trimethyllysine; by EEF1AKMT1 modification. The segment at 91–94 (DAPG) is G3. 153 to 156 (NKMD) lines the GTP pocket. Residues 153–156 (NKMD) are G4. Lys-165 carries the N6,N6,N6-trimethyllysine; alternate; by EEF1AKMT3 modification. Lys-165 is subject to N6,N6-dimethyllysine; alternate; by EEF1AKMT3. Lys-165 is modified (N6-acetyllysine; alternate). An N6-methyllysine; alternate; by EEF1AKMT3 modification is found at Lys-165. Lys-172 bears the N6-acetyllysine mark. 194–196 (SGW) lines the GTP pocket. The segment at 194–196 (SGW) is G5. Lys-273 carries the N6-acetyllysine modification. At Ser-300 the chain carries Phosphoserine; by TGFBR1. Glu-301 carries the 5-glutamyl glycerylphosphorylethanolamine modification. At Lys-318 the chain carries N6,N6,N6-trimethyllysine; by EEF1AKMT2. The residue at position 374 (Glu-374) is a 5-glutamyl glycerylphosphorylethanolamine. Lys-385 participates in a covalent cross-link: Glycyl lysine isopeptide (Lys-Gly) (interchain with G-Cter in ubiquitin). Position 392 is an N6-acetyllysine; alternate (Lys-392). Lys-392 carries the post-translational modification N6-succinyllysine; alternate. Thr-432 is subject to Phosphothreonine; by PASK. Lys-439 is modified (N6-acetyllysine).

The protein belongs to the TRAFAC class translation factor GTPase superfamily. Classic translation factor GTPase family. EF-Tu/EF-1A subfamily. Found in a nuclear export complex with XPO5, EEF1A1, Ran and aminoacylated tRNA. Interacts with PARP1 and TXK. Interacts with KARS1. May interact with ERGIC2. Interacts with IFIT1 (via TPR repeats 4-7). Interacts with DLC1, facilitating distribution to the membrane periphery and ruffles upon growth factor stimulation. Interacts with ZPR1; the interaction occurs in a epidermal growth factor (EGF)-dependent manner. Interacts with PPP1R16B. Interacts with SPHK1 and SPHK2; both interactions increase SPHK1 and SPHK2 kinase activity. Interacts with guanyl-nucleotide exchange factor EEF1B2. Interacts (via middle-region) with HTATIP2 (via N-terminus); the interaction is direct and competes with EEF1A1 binding to guanyl-nucleotide exchange factor EEF1B2, thereby inhibiting GDP for GTP exchange and reactivation of EEF1A1. Interacts with tRNA. ISGylated. In terms of processing, phosphorylated by TXK. Phosphorylation by PASK increases translation efficiency. Phosphorylated by ROCK2. Phosphorylation by TGFBR1 inhibits translation elongation. Post-translationally, trimethylated at Lys-79 by EEF1AKMT1. Methylated at Lys-165 by EEF1AKMT3, methylation by EEF1AKMT3 is dynamic as well as inducible by stress conditions, such as ER-stress, and plays a regulatory role on mRNA translation. Trimethylated at Lys-318 by EEF1AKMT2. Mono-, di-, and trimethylated at Lys-36 by EEF1AKMT4; trimethylated form is predominant. Methylation by EEF1AKMT4 contributes to the fine-tuning of translation rates for a subset of tRNAs. Trimethylated at Gly-2 by METTL13. Mono- and dimethylated at Lys-55 by METTL13; dimethylated form is predominant. Ubiquitinated at Lys-385 by RNF14 in response to ribosome collisions (ribosome stalling), leading to its degradation by the proteasome and rescue of stalled ribosomes.

The protein resides in the cytoplasm. Its subcellular location is the nucleus. It localises to the nucleolus. It is found in the cell membrane. The catalysed reaction is GTP + H2O = GDP + phosphate + H(+). Functionally, translation elongation factor that catalyzes the GTP-dependent binding of aminoacyl-tRNA (aa-tRNA) to the A-site of ribosomes during the elongation phase of protein synthesis. Base pairing between the mRNA codon and the aa-tRNA anticodon promotes GTP hydrolysis, releasing the aa-tRNA from EEF1A1 and allowing its accommodation into the ribosome. The growing protein chain is subsequently transferred from the P-site peptidyl tRNA to the A-site aa-tRNA, extending it by one amino acid through ribosome-catalyzed peptide bond formation. Also plays a role in the positive regulation of IFNG transcription in T-helper 1 cells as part of an IFNG promoter-binding complex with TXK and PARP1. Also plays a role in cytoskeleton organization by promoting actin bundling. In Equus caballus (Horse), this protein is Elongation factor 1-alpha 1 (EEF1A1).